The sequence spans 291 residues: 4-hydroxy-tetrahydrodipicolinate synthase (291 aa).

Position 45 (threonine 45) interacts with pyruvate. Tyrosine 133 (proton donor/acceptor) is an active-site residue. Catalysis depends on lysine 161, which acts as the Schiff-base intermediate with substrate. Isoleucine 203 contributes to the pyruvate binding site.

This sequence belongs to the DapA family. In terms of assembly, homotetramer; dimer of dimers.

It is found in the cytoplasm. It carries out the reaction L-aspartate 4-semialdehyde + pyruvate = (2S,4S)-4-hydroxy-2,3,4,5-tetrahydrodipicolinate + H2O + H(+). The protein operates within amino-acid biosynthesis; L-lysine biosynthesis via DAP pathway; (S)-tetrahydrodipicolinate from L-aspartate: step 3/4. Its function is as follows. Catalyzes the condensation of (S)-aspartate-beta-semialdehyde [(S)-ASA] and pyruvate to 4-hydroxy-tetrahydrodipicolinate (HTPA). In Neisseria meningitidis serogroup C / serotype 2a (strain ATCC 700532 / DSM 15464 / FAM18), this protein is 4-hydroxy-tetrahydrodipicolinate synthase.